We begin with the raw amino-acid sequence, 296 residues long: uncharacterized protein (296 aa).

The N-terminal stretch at 1–20 (MKKALGILAILLILVGGYFA) is a signal peptide.

This is an uncharacterized protein from Aquifex aeolicus (strain VF5).